A 426-amino-acid chain; its full sequence is MKSFTRNLRRFQTPRRNLHGISYTPKKVEGVSFAGRETPTATGSLSVVINAGSRYQPDAGVSHLLEKFAFKTTEERSALRITRESELLGGQLSTQITREHIILTARFLNEYLEYYARLLAEVVDATKFLPFQLTEEVLPTARIESELFREDILRVAMAKLHEKAFHRGIGNEVYLPASASPSISEIKDFASKAYVKSNFSVISSGPDVQKASDLCAKYFAVIPDGSPLKSAPTKISSGESRVYSKGTNYFCLGFPAPAASPELFVLSSILGGDAAVKWSHGNTLLAKAAGTASEYKATAVADLTPYSDASLLSVVISGSCPKAIKATASESFKALKSLSSNIPNDVVKSGIAMAKTKYLSAFEPVTLNAISASSLVSASKGSDAFISGFDKVTPASISKVVSSLLAKPASTVAVGNLDVLPYYDEL.

The transit peptide at 1 to 30 (MKSFTRNLRRFQTPRRNLHGISYTPKKVEG) directs the protein to the mitochondrion.

Belongs to the peptidase M16 family. UQCRC2/QCR2 subfamily. Component of the ubiquinol-cytochrome c oxidoreductase (cytochrome b-c1 complex, complex III, CIII), a multisubunit enzyme composed of 3 respiratory subunits cytochrome b, cytochrome c1 and Rieske protein, 2 core protein subunits, and additional low-molecular weight protein subunits. The complex exists as an obligatory dimer and forms supercomplexes (SCs) in the inner mitochondrial membrane with cytochrome c oxidase (complex IV, CIV).

Its subcellular location is the mitochondrion inner membrane. In terms of biological role, component of the ubiquinol-cytochrome c oxidoreductase, a multisubunit transmembrane complex that is part of the mitochondrial electron transport chain which drives oxidative phosphorylation. The respiratory chain contains 3 multisubunit complexes succinate dehydrogenase (complex II, CII), ubiquinol-cytochrome c oxidoreductase (cytochrome b-c1 complex, complex III, CIII) and cytochrome c oxidase (complex IV, CIV), that cooperate to transfer electrons derived from NADH and succinate to molecular oxygen, creating an electrochemical gradient over the inner membrane that drives transmembrane transport and the ATP synthase. The cytochrome b-c1 complex catalyzes electron transfer from ubiquinol to cytochrome c, linking this redox reaction to translocation of protons across the mitochondrial inner membrane, with protons being carried across the membrane as hydrogens on the quinol. In the process called Q cycle, 2 protons are consumed from the matrix, 4 protons are released into the intermembrane space and 2 electrons are passed to cytochrome c. The chain is Cytochrome b-c1 complex subunit 2, mitochondrial (qcr2) from Schizosaccharomyces pombe (strain 972 / ATCC 24843) (Fission yeast).